We begin with the raw amino-acid sequence, 203 residues long: Imidazoleglycerol-phosphate dehydratase (203 aa).

This sequence belongs to the imidazoleglycerol-phosphate dehydratase family.

It is found in the cytoplasm. It carries out the reaction D-erythro-1-(imidazol-4-yl)glycerol 3-phosphate = 3-(imidazol-4-yl)-2-oxopropyl phosphate + H2O. It participates in amino-acid biosynthesis; L-histidine biosynthesis; L-histidine from 5-phospho-alpha-D-ribose 1-diphosphate: step 6/9. This chain is Imidazoleglycerol-phosphate dehydratase, found in Parvibaculum lavamentivorans (strain DS-1 / DSM 13023 / NCIMB 13966).